Reading from the N-terminus, the 212-residue chain is ATP-dependent dethiobiotin synthetase BioD (212 aa).

Gly-13–Val-18 is a binding site for ATP. Residue Thr-17 participates in Mg(2+) binding. Lys-33 is an active-site residue. Ser-37 lines the substrate pocket. Mg(2+) is bound at residue Glu-100. Residues Glu-100 to Gly-103 and Pro-184 to Leu-186 each bind ATP.

The protein belongs to the dethiobiotin synthetase family. As to quaternary structure, homodimer. Requires Mg(2+) as cofactor.

It is found in the cytoplasm. It catalyses the reaction (7R,8S)-7,8-diammoniononanoate + CO2 + ATP = (4R,5S)-dethiobiotin + ADP + phosphate + 3 H(+). It functions in the pathway cofactor biosynthesis; biotin biosynthesis; biotin from 7,8-diaminononanoate: step 1/2. Its function is as follows. Catalyzes a mechanistically unusual reaction, the ATP-dependent insertion of CO2 between the N7 and N8 nitrogen atoms of 7,8-diaminopelargonic acid (DAPA, also called 7,8-diammoniononanoate) to form a ureido ring. This is ATP-dependent dethiobiotin synthetase BioD from Rhodopseudomonas palustris (strain ATCC BAA-98 / CGA009).